Here is a 141-residue protein sequence, read N- to C-terminus: Hemoglobin subunit alpha-1/2 (141 aa).

The Globin domain maps to 1 to 141 (VLSPADKTNV…VSTVLTSKYR (141 aa)). A Phosphoserine modification is found at S3. K7 carries the N6-succinyllysine modification. Position 8 is a phosphothreonine (T8). The residue at position 11 (K11) is an N6-succinyllysine. Residue K16 is modified to N6-acetyllysine; alternate. K16 carries the post-translational modification N6-succinyllysine; alternate. Y24 carries the post-translational modification Phosphotyrosine. K40 carries the N6-succinyllysine modification. Phosphoserine is present on S49. H58 lines the O2 pocket. H87 lines the heme b pocket. S102 is subject to Phosphoserine. T108 carries the post-translational modification Phosphothreonine. S124 is modified (phosphoserine). Phosphothreonine occurs at positions 134 and 137. The residue at position 138 (S138) is a Phosphoserine.

It belongs to the globin family. In terms of assembly, heterotetramer of two alpha chains and two beta chains. In terms of tissue distribution, red blood cells.

In terms of biological role, involved in oxygen transport from the lung to the various peripheral tissues. In Leptonychotes weddellii (Weddell seal), this protein is Hemoglobin subunit alpha-1/2.